The sequence spans 254 residues: Translation initiation factor 2 subunit alpha (254 aa).

In terms of domain architecture, S1 motif spans 10-81 (GDLVVVKITE…ERKVVDLSLK (72 aa)).

This sequence belongs to the eIF-2-alpha family. In terms of assembly, heterotrimer composed of an alpha, a beta and a gamma chain.

In terms of biological role, eIF-2 functions in the early steps of protein synthesis by forming a ternary complex with GTP and initiator tRNA. This Thermoplasma acidophilum (strain ATCC 25905 / DSM 1728 / JCM 9062 / NBRC 15155 / AMRC-C165) protein is Translation initiation factor 2 subunit alpha.